A 435-amino-acid chain; its full sequence is 3-ketoacyl-CoA thiolase (435 aa).

The active-site Acyl-thioester intermediate is the Cys98. Residues His391 and Cys421 each act as proton acceptor in the active site.

Belongs to the thiolase-like superfamily. Thiolase family. Heterotetramer of two alpha chains (FadJ) and two beta chains (FadI).

Its subcellular location is the cytoplasm. It catalyses the reaction an acyl-CoA + acetyl-CoA = a 3-oxoacyl-CoA + CoA. The protein operates within lipid metabolism; fatty acid beta-oxidation. Its function is as follows. Catalyzes the final step of fatty acid oxidation in which acetyl-CoA is released and the CoA ester of a fatty acid two carbons shorter is formed. The polypeptide is 3-ketoacyl-CoA thiolase (Vibrio parahaemolyticus serotype O3:K6 (strain RIMD 2210633)).